The chain runs to 132 residues: MVLTDPIADYLTRIRNANMVRHESLVVPASKMKKDISEILKREGFIRDYEVIDDDKQGVIRIFLKYGKNNERVISGLKRISKPGLRSYVKSDAVPKVLNGLGIAIISTSEGVITDKEARAKNVGGEVLAYVW.

The protein belongs to the universal ribosomal protein uS8 family. In terms of assembly, part of the 30S ribosomal subunit. Contacts proteins S5 and S12.

Functionally, one of the primary rRNA binding proteins, it binds directly to 16S rRNA central domain where it helps coordinate assembly of the platform of the 30S subunit. This Lacticaseibacillus casei (strain BL23) (Lactobacillus casei) protein is Small ribosomal subunit protein uS8.